The chain runs to 168 residues: Small ribosomal subunit protein bS16 (168 aa).

Residues 110–168 form a disordered region; the sequence is LAEAEGGPSNEATQPKKKKAPAKKAASDIEATADPAGNADKSEPAAEGEDATVAGATEG.

It belongs to the bacterial ribosomal protein bS16 family.

The polypeptide is Small ribosomal subunit protein bS16 (Mycobacterium sp. (strain JLS)).